Here is a 486-residue protein sequence, read N- to C-terminus: Aspartyl/glutamyl-tRNA(Asn/Gln) amidotransferase subunit B (486 aa).

Belongs to the GatB/GatE family. GatB subfamily. In terms of assembly, heterotrimer of A, B and C subunits.

The catalysed reaction is L-glutamyl-tRNA(Gln) + L-glutamine + ATP + H2O = L-glutaminyl-tRNA(Gln) + L-glutamate + ADP + phosphate + H(+). It catalyses the reaction L-aspartyl-tRNA(Asn) + L-glutamine + ATP + H2O = L-asparaginyl-tRNA(Asn) + L-glutamate + ADP + phosphate + 2 H(+). Its function is as follows. Allows the formation of correctly charged Asn-tRNA(Asn) or Gln-tRNA(Gln) through the transamidation of misacylated Asp-tRNA(Asn) or Glu-tRNA(Gln) in organisms which lack either or both of asparaginyl-tRNA or glutaminyl-tRNA synthetases. The reaction takes place in the presence of glutamine and ATP through an activated phospho-Asp-tRNA(Asn) or phospho-Glu-tRNA(Gln). This Azoarcus sp. (strain BH72) protein is Aspartyl/glutamyl-tRNA(Asn/Gln) amidotransferase subunit B.